A 140-amino-acid chain; its full sequence is Ribosome maturation factor RimP (140 aa).

Belongs to the RimP family.

It localises to the cytoplasm. Functionally, required for maturation of 30S ribosomal subunits. In Campylobacter jejuni subsp. jejuni serotype O:2 (strain ATCC 700819 / NCTC 11168), this protein is Ribosome maturation factor RimP.